The primary structure comprises 166 residues: NAD(P)H-quinone oxidoreductase subunit I, chloroplastic (166 aa).

4Fe-4S ferredoxin-type domains follow at residues 55–84 (GRIHFEFDKCIACEVCVRVCPIDLPVVDWK) and 95–124 (LNYSIDFGICIFCGNCVEYCPTNCLSMTEE). Residues Cys-64, Cys-67, Cys-70, Cys-74, Cys-104, Cys-107, Cys-110, and Cys-114 each contribute to the [4Fe-4S] cluster site.

Belongs to the complex I 23 kDa subunit family. As to quaternary structure, NDH is composed of at least 16 different subunits, 5 of which are encoded in the nucleus. Requires [4Fe-4S] cluster as cofactor.

It is found in the plastid. The protein localises to the chloroplast thylakoid membrane. The catalysed reaction is a plastoquinone + NADH + (n+1) H(+)(in) = a plastoquinol + NAD(+) + n H(+)(out). It catalyses the reaction a plastoquinone + NADPH + (n+1) H(+)(in) = a plastoquinol + NADP(+) + n H(+)(out). In terms of biological role, NDH shuttles electrons from NAD(P)H:plastoquinone, via FMN and iron-sulfur (Fe-S) centers, to quinones in the photosynthetic chain and possibly in a chloroplast respiratory chain. The immediate electron acceptor for the enzyme in this species is believed to be plastoquinone. Couples the redox reaction to proton translocation, and thus conserves the redox energy in a proton gradient. The sequence is that of NAD(P)H-quinone oxidoreductase subunit I, chloroplastic from Chamaechaenactis scaposa (Fullstem).